Reading from the N-terminus, the 108-residue chain is Nucleoid-associated protein BamMC406_1737 (108 aa).

Polar residues predominate over residues alanine 85–threonine 95. The tract at residues alanine 85–phenylalanine 108 is disordered. Positions proline 99–phenylalanine 108 are enriched in pro residues.

The protein belongs to the YbaB/EbfC family. Homodimer.

It is found in the cytoplasm. The protein resides in the nucleoid. Functionally, binds to DNA and alters its conformation. May be involved in regulation of gene expression, nucleoid organization and DNA protection. This is Nucleoid-associated protein BamMC406_1737 from Burkholderia ambifaria (strain MC40-6).